The sequence spans 397 residues: Odorant receptor 2a (397 aa).

Over 1-38 (MEKQEDFKLNTHSAVYYHWRVWELTGLMRPPGVSSLLY) the chain is Cytoplasmic. Residues 39–59 (VVYSITVNLVVTVLFPLSLLA) form a helical membrane-spanning segment. Over 60–72 (RLLFTTNMAGLCE) the chain is Extracellular. The helical transmembrane segment at 73–92 (NLTITITDIVANLKFANVYM) threads the bilayer. The Cytoplasmic portion of the chain corresponds to 93–131 (VRKQLHEIRSLLRLMDARARLVGDPEEISALRKEVNIAQ). Residues 132 to 150 (GTFRTFASIFVFGTTLSCV) form a helical membrane-spanning segment. Residues 151–176 (RVVVRPDRELLYPAWFGVDWMHSTRN) are Extracellular-facing. Residues 177–197 (YVLINIYQLFGLIVQAIQNCA) traverse the membrane as a helical segment. The Cytoplasmic portion of the chain corresponds to 198 to 272 (SDSYPPAFLC…IIQRVLSVPC (75 aa)). Residues 273–293 (MAQFVCSAAVQCTVAMHFLYV) form a helical membrane-spanning segment. Residues 294–301 (ADDHDHTA) lie on the Extracellular side of the membrane. A helical membrane pass occupies residues 302–322 (MIISIVFFSAVTLEVFVICYF). Over 323 to 363 (GDRMRTQSEALCDAFYDCNWIEQLPKFKRELLFTLARTQRP) the chain is Cytoplasmic. A helical transmembrane segment spans residues 364–383 (SLIYAGNYIALSLETFEQVM). Over 384 to 397 (RFTYSVFTLLLRAK) the chain is Extracellular.

The protein belongs to the insect chemoreceptor superfamily. Heteromeric odorant receptor channel (TC 1.A.69) family. Or2a subfamily. As to quaternary structure, interacts with Orco. Complexes exist early in the endomembrane system in olfactory sensory neurons (OSNs), coupling these complexes to the conserved ciliary trafficking pathway. Expressed in 20 sensory neurons on the distal edge of the antenna.

It is found in the cell membrane. In terms of biological role, odorant receptor which mediates acceptance or avoidance behavior, depending on its substrates. The odorant receptor repertoire encodes a large collection of odor stimuli that vary widely in identity, intensity, and duration. May form a complex with Orco to form odorant-sensing units, providing sensitive and prolonged odorant signaling and calcium permeability. This chain is Odorant receptor 2a (Or2a), found in Drosophila melanogaster (Fruit fly).